The primary structure comprises 31 residues: GLLPCAESCVYIPCLTTVIGCSCKSKVCYKN.

A cross-link (cyclopeptide (Gly-Asn)) is located at residues 1–31 (GLLPCAESCVYIPCLTTVIGCSCKSKVCYKN). Intrachain disulfides connect C5–C21, C9–C23, and C14–C28.

This is a cyclic peptide.

Its function is as follows. Probably participates in a plant defense mechanism. Has cytotoxic activity, active against a human lymphoma cell line with an IC(50) of 1.6 uM. This chain is Cyclotide vibi-H, found in Viola biflora (Yellow wood violet).